A 66-amino-acid chain; its full sequence is Large ribosomal subunit protein bL35 (66 aa).

It belongs to the bacterial ribosomal protein bL35 family.

In Thermodesulfovibrio yellowstonii (strain ATCC 51303 / DSM 11347 / YP87), this protein is Large ribosomal subunit protein bL35.